Reading from the N-terminus, the 488-residue chain is Solanidine UDP-glucose glucosyltransferase 1 (488 aa).

Histidine 23 functions as the Proton acceptor in the catalytic mechanism. Histidine 23 provides a ligand contact to an anthocyanidin. Catalysis depends on aspartate 127, which acts as the Charge relay. Positions 352, 354, 369, 373, 374, and 377 each coordinate UDP-alpha-D-glucose. Alanine 392 is a binding site for an anthocyanidin. Residues aspartate 393 and glutamine 394 each contribute to the UDP-alpha-D-glucose site.

The protein belongs to the UDP-glycosyltransferase family. As to expression, expressed in the shoot apical meristem (SAM) and tuber.

The enzyme catalyses solasodine + UDP-alpha-D-glucose = solasodine 3-beta-D-glucoside + UDP + H(+). It catalyses the reaction solanidine + UDP-alpha-D-glucose = solanidine 3-O-beta-D-glucopyranoside + UDP + H(+). It carries out the reaction tomatidine + UDP-alpha-D-glucose = tomatidine 3-O-beta-D-glucopyranoside + UDP + H(+). Glucosyltransferase involved in the glucosylation of the steroidal alkaloid aglycons solanidine, solasodine and tomatidine to produce their corresponding glycoalkaloids. This Solanum tuberosum (Potato) protein is Solanidine UDP-glucose glucosyltransferase 1.